The sequence spans 186 residues: Heat shock protein 23 (186 aa).

The sHSP domain maps to 53 to 161 (VGASSGSSGA…KGNERIVQIQ (109 aa)). The tract at residues 163–186 (VGPAHLNVKENPKEAVEQDNGNDK) is disordered. The span at 169 to 186 (NVKENPKEAVEQDNGNDK) shows a compositional bias: basic and acidic residues.

This sequence belongs to the small heat shock protein (HSP20) family.

In Drosophila melanogaster (Fruit fly), this protein is Heat shock protein 23 (Hsp23).